Reading from the N-terminus, the 414-residue chain is Phosphoglycerate kinase (414 aa).

Substrate contacts are provided by residues 20–22 (DIN), Arg37, 60–63 (HQSR), Arg117, and Arg164. ATP-binding positions include Glu338 and 364 to 367 (GGHL).

This sequence belongs to the phosphoglycerate kinase family. As to quaternary structure, monomer.

It is found in the cytoplasm. It catalyses the reaction (2R)-3-phosphoglycerate + ATP = (2R)-3-phospho-glyceroyl phosphate + ADP. Its pathway is carbohydrate degradation; glycolysis; pyruvate from D-glyceraldehyde 3-phosphate: step 2/5. This chain is Phosphoglycerate kinase, found in Methanococcus maripaludis (strain DSM 14266 / JCM 13030 / NBRC 101832 / S2 / LL).